A 78-amino-acid chain; its full sequence is uncharacterized protein (78 aa).

2 helical membrane passes run 25-45 (IITA…DEVV) and 50-70 (KCAD…FVFV).

It localises to the membrane. This is an uncharacterized protein from Saccharomyces cerevisiae (strain ATCC 204508 / S288c) (Baker's yeast).